The following is a 471-amino-acid chain: Vitellogenic carboxypeptidase (471 aa).

A signal peptide spans 1–19 (MVKFHLLVLIAFTCYTCSD). A glycan (N-linked (GlcNAc...) asparagine) is linked at N135. Catalysis depends on residues S207, D391, and H448.

Belongs to the peptidase S10 family. As to expression, synthesized in the fat body of vitellogenic females, secreted into the hemolymph and accumulates in yolk bodies of developing oocytes.

The protein resides in the secreted. Its function is as follows. May play a role in activating hydrolytic enzymes that are involved in the degradation of yolk proteins in developing embryos or may function as an exopeptidase in the degradation of vitellogenin. The chain is Vitellogenic carboxypeptidase (VCP) from Aedes aegypti (Yellowfever mosquito).